Consider the following 192-residue polypeptide: Holliday junction branch migration complex subunit RuvA (192 aa).

A domain I region spans residues 1–61 (MFEYLKGIVT…DTGITLYGFL (61 aa)). Residues 62-137 (SLEDKELFLK…KLGDYVKKST (76 aa)) are domain II. Residues 137–140 (TAAA) are flexible linker. The interval 141–192 (DLTPSLQDALLALVALGYTQKEVDRITPKLAKLPENTADGYVKEALALLLKK) is domain III.

This sequence belongs to the RuvA family. Homotetramer. Forms an RuvA(8)-RuvB(12)-Holliday junction (HJ) complex. HJ DNA is sandwiched between 2 RuvA tetramers; dsDNA enters through RuvA and exits via RuvB. An RuvB hexamer assembles on each DNA strand where it exits the tetramer. Each RuvB hexamer is contacted by two RuvA subunits (via domain III) on 2 adjacent RuvB subunits; this complex drives branch migration. In the full resolvosome a probable DNA-RuvA(4)-RuvB(12)-RuvC(2) complex forms which resolves the HJ.

The protein resides in the cytoplasm. Its function is as follows. The RuvA-RuvB-RuvC complex processes Holliday junction (HJ) DNA during genetic recombination and DNA repair, while the RuvA-RuvB complex plays an important role in the rescue of blocked DNA replication forks via replication fork reversal (RFR). RuvA specifically binds to HJ cruciform DNA, conferring on it an open structure. The RuvB hexamer acts as an ATP-dependent pump, pulling dsDNA into and through the RuvAB complex. HJ branch migration allows RuvC to scan DNA until it finds its consensus sequence, where it cleaves and resolves the cruciform DNA. This chain is Holliday junction branch migration complex subunit RuvA, found in Lactobacillus johnsonii (strain CNCM I-12250 / La1 / NCC 533).